A 486-amino-acid chain; its full sequence is Cardiolipin synthase A (486 aa).

2 helical membrane-spanning segments follow: residues 3-23 (IFYN…IANI) and 38-58 (MSWL…WFFF). PLD phosphodiesterase domains follow at residues 219–246 (VDVR…VDPY) and 399–426 (QKGL…DMRS). Catalysis depends on residues His224, Lys226, Asp231, His404, Lys406, and Asp411.

The protein belongs to the phospholipase D family. Cardiolipin synthase subfamily. ClsA sub-subfamily.

It is found in the cell inner membrane. It carries out the reaction 2 a 1,2-diacyl-sn-glycero-3-phospho-(1'-sn-glycerol) = a cardiolipin + glycerol. In terms of biological role, catalyzes the reversible phosphatidyl group transfer from one phosphatidylglycerol molecule to another to form cardiolipin (CL) (diphosphatidylglycerol) and glycerol. The polypeptide is Cardiolipin synthase A (Buchnera aphidicola subsp. Acyrthosiphon pisum (strain APS) (Acyrthosiphon pisum symbiotic bacterium)).